The following is a 288-amino-acid chain: Signal recognition particle receptor FtsY (288 aa).

GTP is bound by residues 93-100 (GINGTGKT), 175-179 (DTAGR), and 233-236 (TKLD).

This sequence belongs to the GTP-binding SRP family. FtsY subfamily. Part of the signal recognition particle protein translocation system, which is composed of SRP and FtsY.

The protein localises to the cell membrane. Its subcellular location is the cytoplasm. The enzyme catalyses GTP + H2O = GDP + phosphate + H(+). Functionally, involved in targeting and insertion of nascent membrane proteins into the cytoplasmic membrane. Acts as a receptor for the complex formed by the signal recognition particle (SRP) and the ribosome-nascent chain (RNC). The sequence is that of Signal recognition particle receptor FtsY from Thermoplasma acidophilum (strain ATCC 25905 / DSM 1728 / JCM 9062 / NBRC 15155 / AMRC-C165).